The following is a 332-amino-acid chain: Ketol-acid reductoisomerase (NADP(+)) (332 aa).

The KARI N-terminal Rossmann domain maps to Ala2–Thr182. Residues Tyr25–Gln28, Arg48, Ser53, and Asp83–Gln86 each bind NADP(+). His108 is an active-site residue. Gly134 serves as a coordination point for NADP(+). The KARI C-terminal knotted domain maps to Thr183–Leu328. Mg(2+)-binding residues include Asp191, Glu195, Glu227, and Glu231. Residue Ser252 participates in substrate binding.

The protein belongs to the ketol-acid reductoisomerase family. Mg(2+) serves as cofactor.

The catalysed reaction is (2R)-2,3-dihydroxy-3-methylbutanoate + NADP(+) = (2S)-2-acetolactate + NADPH + H(+). It carries out the reaction (2R,3R)-2,3-dihydroxy-3-methylpentanoate + NADP(+) = (S)-2-ethyl-2-hydroxy-3-oxobutanoate + NADPH + H(+). Its pathway is amino-acid biosynthesis; L-isoleucine biosynthesis; L-isoleucine from 2-oxobutanoate: step 2/4. It functions in the pathway amino-acid biosynthesis; L-valine biosynthesis; L-valine from pyruvate: step 2/4. Its function is as follows. Involved in the biosynthesis of branched-chain amino acids (BCAA). Catalyzes an alkyl-migration followed by a ketol-acid reduction of (S)-2-acetolactate (S2AL) to yield (R)-2,3-dihydroxy-isovalerate. In the isomerase reaction, S2AL is rearranged via a Mg-dependent methyl migration to produce 3-hydroxy-3-methyl-2-ketobutyrate (HMKB). In the reductase reaction, this 2-ketoacid undergoes a metal-dependent reduction by NADPH to yield (R)-2,3-dihydroxy-isovalerate. This Dictyoglomus turgidum (strain DSM 6724 / Z-1310) protein is Ketol-acid reductoisomerase (NADP(+)).